The primary structure comprises 330 residues: Probable xanthine dehydrogenase subunit A (330 aa).

Could be composed of four subunits: PucA, PucC, PucD and PucE.

The enzyme catalyses xanthine + NAD(+) + H2O = urate + NADH + H(+). It catalyses the reaction hypoxanthine + NAD(+) + H2O = xanthine + NADH + H(+). Its pathway is purine metabolism; hypoxanthine degradation; urate from hypoxanthine: step 1/2. It functions in the pathway purine metabolism; hypoxanthine degradation; urate from hypoxanthine: step 2/2. Oxidizes hypoxanthine and xanthine to uric acid. PucA subunit could exert a molybdenum cofactor recruiting function. This chain is Probable xanthine dehydrogenase subunit A (pucA), found in Bacillus subtilis (strain 168).